The primary structure comprises 393 residues: Na(+)/H(+) antiporter NhaA 1 (393 aa).

The next 11 membrane-spanning stretches (helical) occupy residues alanine 23–phenylalanine 43, leucine 58–leucine 78, methionine 96–phenylalanine 116, glycine 126–glycine 146, valine 155–phenylalanine 175, alanine 178–methionine 198, glycine 224–proline 244, valine 265–leucine 285, isoleucine 298–isoleucine 318, leucine 334–leucine 354, and isoleucine 367–valine 387.

This sequence belongs to the NhaA Na(+)/H(+) (TC 2.A.33) antiporter family.

It is found in the cell inner membrane. The catalysed reaction is Na(+)(in) + 2 H(+)(out) = Na(+)(out) + 2 H(+)(in). In terms of biological role, na(+)/H(+) antiporter that extrudes sodium in exchange for external protons. This Brucella anthropi (strain ATCC 49188 / DSM 6882 / CCUG 24695 / JCM 21032 / LMG 3331 / NBRC 15819 / NCTC 12168 / Alc 37) (Ochrobactrum anthropi) protein is Na(+)/H(+) antiporter NhaA 1.